A 1254-amino-acid polypeptide reads, in one-letter code: Juxtamembrane domain-associated catenin (1254 aa).

3 disordered regions span residues 1-38 (MISS…TMRK), 84-106 (AGPT…DNPP), and 145-209 (PYSN…SAPG). The span at 12–22 (PIPEEGTEADG) shows a compositional bias: acidic residues. The segment covering 145 to 157 (PYSNIDFDSSGLP) has biased composition (polar residues). Fibronectin type-III domains are found at residues 207–302 (APGV…IPIS), 315–411 (APGR…IRPA), 428–518 (PPGQ…LRPT), and 530–624 (ILEA…IEPS). A disordered region spans residues 412 to 433 (APQRHVPARKVSESVQPPGQPQ). Residues 662-685 (MVRESPPLPERDDSPPPLRRANNN) are disordered. ARM repeat units lie at residues 733-775 (GGIP…AVME), 777-820 (DGVR…ESAT), 874-922 (NLIE…YDPA), 969-1012 (HVVK…RAAV), and 1016-1058 (KGLP…KYAL). The interval 920–960 (DPAAAHSSSSKNMKHVASPKPEKKKKDKEKKKDKNPKNIVT) is disordered. Positions 1159–1254 (GTARRGDSST…GGGNIDDSWV (96 aa)) are disordered. Residues 1166 to 1176 (SSTLARPISSQ) are compositionally biased toward polar residues. Positions 1177–1187 (GRERPSMHQLD) are enriched in basic and acidic residues.

Belongs to the beta-catenin family. As to quaternary structure, associated with the catenin-cadherin complex consisting of hmr-1, hmp-1 and hmp-2. Interacts with hmr-1. Interacts with picc-1. In terms of tissue distribution, epidermal cells.

Its subcellular location is the cell junction. The protein resides in the adherens junction. It localises to the nucleus. Functionally, may act as a positive modulator of hmr-1 function during epidermal morphogenesis. Required for proper localization of other junctional components, such as pac-1. This is Juxtamembrane domain-associated catenin (jac-1) from Caenorhabditis elegans.